We begin with the raw amino-acid sequence, 234 residues long: Large ribosomal subunit protein uL1 (234 aa).

This sequence belongs to the universal ribosomal protein uL1 family. In terms of assembly, part of the 50S ribosomal subunit.

Functionally, binds directly to 23S rRNA. The L1 stalk is quite mobile in the ribosome, and is involved in E site tRNA release. Protein L1 is also a translational repressor protein, it controls the translation of the L11 operon by binding to its mRNA. This chain is Large ribosomal subunit protein uL1, found in Desulfatibacillum aliphaticivorans.